Reading from the N-terminus, the 615-residue chain is ATP-dependent zinc metalloprotease FtsH (615 aa).

Over 1–8 (MAMNKDKP) the chain is Cytoplasmic. A helical transmembrane segment spans residues 9 to 29 (WTLYLLAVGLAVLAAVQFGLF). Residues 30–104 (SQPAVQAIPY…FSGVVEDNTV (75 aa)) lie on the Periplasmic side of the membrane. A helical transmembrane segment spans residues 105 to 125 (ATVMGALMPLLMLLALWYFLF). Residues 126-615 (HGLGQKQGLG…ATYVLVDATK (490 aa)) are Cytoplasmic-facing. 198–205 (GPPGTGKT) is a binding site for ATP. Zn(2+) is bound at residue His-420. Residue Glu-421 is part of the active site. Residues His-424 and Asp-497 each contribute to the Zn(2+) site.

In the central section; belongs to the AAA ATPase family. The protein in the C-terminal section; belongs to the peptidase M41 family. In terms of assembly, homohexamer. It depends on Zn(2+) as a cofactor.

It localises to the cell inner membrane. Its function is as follows. Acts as a processive, ATP-dependent zinc metallopeptidase for both cytoplasmic and membrane proteins. Plays a role in the quality control of integral membrane proteins. The chain is ATP-dependent zinc metalloprotease FtsH from Pseudomonas putida (strain ATCC 700007 / DSM 6899 / JCM 31910 / BCRC 17059 / LMG 24140 / F1).